Here is a 273-residue protein sequence, read N- to C-terminus: 4-hydroxy-tetrahydrodipicolinate reductase (273 aa).

NAD(+)-binding positions include 12–17 (GAGGRM) and E38. R39 contacts NADP(+). NAD(+)-binding positions include 102-104 (GTT) and 126-129 (AANF). The active-site Proton donor/acceptor is the H159. H160 lines the (S)-2,3,4,5-tetrahydrodipicolinate pocket. Residue K163 is the Proton donor of the active site. Position 169-170 (169-170 (GT)) interacts with (S)-2,3,4,5-tetrahydrodipicolinate.

Belongs to the DapB family. In terms of assembly, homotetramer.

The protein resides in the cytoplasm. It carries out the reaction (S)-2,3,4,5-tetrahydrodipicolinate + NAD(+) + H2O = (2S,4S)-4-hydroxy-2,3,4,5-tetrahydrodipicolinate + NADH + H(+). The catalysed reaction is (S)-2,3,4,5-tetrahydrodipicolinate + NADP(+) + H2O = (2S,4S)-4-hydroxy-2,3,4,5-tetrahydrodipicolinate + NADPH + H(+). It participates in amino-acid biosynthesis; L-lysine biosynthesis via DAP pathway; (S)-tetrahydrodipicolinate from L-aspartate: step 4/4. Its function is as follows. Catalyzes the conversion of 4-hydroxy-tetrahydrodipicolinate (HTPA) to tetrahydrodipicolinate. The chain is 4-hydroxy-tetrahydrodipicolinate reductase from Shigella boydii serotype 4 (strain Sb227).